A 439-amino-acid polypeptide reads, in one-letter code: uncharacterized protein (439 aa).

A TRAM domain is found at 1–55 (MLEQVRIQKMVNGGYGLAHLSNGKVVLVEGAYPGEEVLIKTYREKRDFSFGKVVS). Residues cysteine 68, cysteine 74, cysteine 77, and cysteine 149 each coordinate [4Fe-4S] cluster. Glutamine 272, tyrosine 301, glutamate 322, and aspartate 367 together coordinate S-adenosyl-L-methionine. The active-site Nucleophile is the cysteine 394.

It belongs to the class I-like SAM-binding methyltransferase superfamily. RNA M5U methyltransferase family.

This is an uncharacterized protein from Thermotoga maritima (strain ATCC 43589 / DSM 3109 / JCM 10099 / NBRC 100826 / MSB8).